We begin with the raw amino-acid sequence, 242 residues long: Probable transcriptional regulatory protein EF_0663 (242 aa).

A compositionally biased stretch (polar residues) spans 1–14; sequence MSGHSKWSNIQGRK. The tract at residues 1–22 is disordered; sequence MSGHSKWSNIQGRKNAQDAKRG.

Belongs to the TACO1 family.

The protein resides in the cytoplasm. The protein is Probable transcriptional regulatory protein EF_0663 of Enterococcus faecalis (strain ATCC 700802 / V583).